We begin with the raw amino-acid sequence, 100 residues long: Small ribosomal subunit protein uS14c (100 aa).

It belongs to the universal ribosomal protein uS14 family. In terms of assembly, part of the 30S ribosomal subunit.

It localises to the plastid. Its function is as follows. Binds 16S rRNA, required for the assembly of 30S particles. The sequence is that of Small ribosomal subunit protein uS14c from Aneura mirabilis (Parasitic liverwort).